A 581-amino-acid chain; its full sequence is Chaperonin GroEL 1 (581 aa).

Residues 29 to 32 (TIGP), 86 to 90 (DGTTT), Gly413, and Asp492 each bind ATP. The disordered stretch occupies residues 522–543 (PEPEPAAPGGPSGDPMGGMGGM). A compositionally biased stretch (gly residues) spans 531–543 (GPSGDPMGGMGGM).

It belongs to the chaperonin (HSP60) family. As to quaternary structure, forms a cylinder of 14 subunits composed of two heptameric rings stacked back-to-back. Interacts with the co-chaperonin GroES.

The protein resides in the cytoplasm. The catalysed reaction is ATP + H2O + a folded polypeptide = ADP + phosphate + an unfolded polypeptide.. Functionally, together with its co-chaperonin GroES, plays an essential role in assisting protein folding. The GroEL-GroES system forms a nano-cage that allows encapsulation of the non-native substrate proteins and provides a physical environment optimized to promote and accelerate protein folding. This is Chaperonin GroEL 1 from Prochlorococcus marinus (strain MIT 9215).